The primary structure comprises 163 residues: Putative H/ACA ribonucleoprotein complex subunit 2-like protein (163 aa).

This sequence belongs to the eukaryotic ribosomal protein eL8 family. In terms of assembly, component of the small nucleolar ribonucleoprotein particle containing H/ACA-type snoRNAs (H/ACA snoRNPs).

The protein localises to the nucleus. It is found in the nucleolus. Required for ribosome biogenesis. Part of a complex which catalyzes pseudouridylation of rRNA. This involves the isomerization of uridine such that the ribose is subsequently attached to C5, instead of the normal N1. Pseudouridine ('psi') residues may serve to stabilize the conformation of rRNAs. This chain is Putative H/ACA ribonucleoprotein complex subunit 2-like protein, found in Caenorhabditis briggsae.